Reading from the N-terminus, the 554-residue chain is Polyamine aminopropyltransferase 2 (554 aa).

The span at 1–13 shows a compositional bias: pro residues; sequence MIEPHAPAPPGSP. The disordered stretch occupies residues 1–20; sequence MIEPHAPAPPGSPPSWGGPC. The next 6 helical transmembrane spans lie at 37–57, 69–89, 106–126, 139–159, 184–204, and 206–226; these read FLVL…ELEL, VTQA…GSLA, AALA…FAWT, ILLV…VPLL, VGAL…LGQL, and GALL…LGLF. Residues 235 to 516 form a spermidine synthase region; it reads RWLLLTANAV…RTAPAPRLDP (282 aa). Residues 247–492 enclose the PABS domain; it reads ALLATATVLA…SVPGPRRAAA (246 aa). Residue Q281 coordinates S-methyl-5'-thioadenosine. The spermidine site is built by H313 and D335. S-methyl-5'-thioadenosine contacts are provided by residues E355 and 389 to 390; that span reads DA. D408 acts as the Proton acceptor in catalysis. The interval 476–495 is disordered; sequence DTGPGPGSVPGPRRAAAGPP. The segment covering 485–495 has biased composition (low complexity); it reads PGPRRAAAGPP.

The protein belongs to the spermidine/spermine synthase family. Homodimer or homotetramer.

It is found in the cell membrane. The enzyme catalyses S-adenosyl 3-(methylsulfanyl)propylamine + putrescine = S-methyl-5'-thioadenosine + spermidine + H(+). It participates in amine and polyamine biosynthesis; spermidine biosynthesis; spermidine from putrescine: step 1/1. Functionally, catalyzes the irreversible transfer of a propylamine group from the amino donor S-adenosylmethioninamine (decarboxy-AdoMet) to putrescine (1,4-diaminobutane) to yield spermidine. The chain is Polyamine aminopropyltransferase 2 from Streptomyces coelicolor (strain ATCC BAA-471 / A3(2) / M145).